Consider the following 874-residue polypeptide: Alanine--tRNA ligase (874 aa).

The Zn(2+) site is built by H564, H568, C665, and H669.

This sequence belongs to the class-II aminoacyl-tRNA synthetase family. Zn(2+) is required as a cofactor.

The protein resides in the cytoplasm. The enzyme catalyses tRNA(Ala) + L-alanine + ATP = L-alanyl-tRNA(Ala) + AMP + diphosphate. Catalyzes the attachment of alanine to tRNA(Ala) in a two-step reaction: alanine is first activated by ATP to form Ala-AMP and then transferred to the acceptor end of tRNA(Ala). Also edits incorrectly charged Ser-tRNA(Ala) and Gly-tRNA(Ala) via its editing domain. This chain is Alanine--tRNA ligase, found in Acidovorax sp. (strain JS42).